The sequence spans 690 residues: Cyclic nucleotide-gated channel alpha-1 (690 aa).

Residues 1-163 (MKKVIINTWH…VVIDPSGNTY (163 aa)) lie on the Cytoplasmic side of the membrane. 2 disordered regions span residues 33–76 (GACS…PSQR) and 88–151 (NVNN…EEKK). Acidic residues predominate over residues 40–54 (GDDDDSASMFEESET). Over residues 64-76 (RSNTHGSGQPSQR) the composition is skewed to polar residues. Basic and acidic residues predominate over residues 111-151 (SKPDDKNENKKDPEKKKKKEKDKDKKKKEEKGKDKKEEEKK). The chain crosses the membrane as a helical span at residues 164–185 (YNWLFCITLPVMYNWTMIIARA). Topologically, residues 186-195 (CFDELQSDYL) are extracellular. Residues 196-215 (EYWLAFDYLSDVVYLLDMFV) form a helical membrane-spanning segment. Residues 216 to 241 (RTRTGYLEQGLLVKEERKLIDKYKST) are Cytoplasmic-facing. A helical transmembrane segment spans residues 242-251 (FQFKLDVLSV). The Extracellular segment spans residues 252-264 (IPTDLLYIKFGWN). A helical transmembrane segment spans residues 265–283 (YPEIRLNRLLRISRMFEFF). Residues 284 to 291 (QRTETRTN) lie on the Cytoplasmic side of the membrane. Residues 292–315 (YPNIFRISNLVMYIIIIIHWNACV) traverse the membrane as a helical segment. An ion conduction pathway region spans residues 293–402 (PNIFRISNLV…NIGSMISNMN (110 aa)). Topologically, residues 316–342 (YFSISKAIGFGNDTWVYPDVNDPDFGR) are extracellular. The N-linked (GlcNAc...) asparagine glycan is linked to Asn327. 2 helical membrane passes run 343–373 (LARK…DSEY) and 374–399 (FFVV…SMIS). Residues 360–363 (TIGE) are selectivity filter. Topologically, residues 400–690 (NMNAARAEFQ…ESGPTDSTQD (291 aa)) are cytoplasmic. The segment at 403–479 (AARAEFQARI…DTLKKVRIFA (77 aa)) is C-linker. The tract at residues 482 to 603 (EAGLLVELVL…EEKGKQILMK (122 aa)) is cyclic nucleotide-binding domain (CNBD). Residues Gly543, Ser546, Arg559, and Thr560 each contribute to the 3',5'-cyclic GMP site. 3',5'-cyclic AMP contacts are provided by Arg559 and Thr560. A coiled-coil region spans residues 621–664 (LEEKVTRMESSVDLLQTRFARILAEYESMQQKLKQRLTKVEKFL).

This sequence belongs to the cyclic nucleotide-gated cation channel (TC 1.A.1.5) family. CNGA1 subfamily. In terms of assembly, forms a heterotetramer with CNGB1 in a 3:1 ratio. May also form cyclic nucleotide-activated homotetrameric channels, that are efficiently activated by saturating cGMP, but poorly activated by saturating cAMP compared to the heterotetramer with CNGB1. The channel binds Ca(2+)-bound CALM1 via CaM1 and CaM2 regions of the CNGB1 subunit; this interaction modulates the affinity of the channel for cNMPs in response to intracellular Ca(2+) levels. In terms of tissue distribution, expressed in the retina, in rod cells (at protein level).

It is found in the cell membrane. It carries out the reaction Ca(2+)(in) = Ca(2+)(out). The catalysed reaction is Na(+)(in) = Na(+)(out). The enzyme catalyses K(+)(in) = K(+)(out). It catalyses the reaction NH4(+)(in) = NH4(+)(out). It carries out the reaction Rb(+)(in) = Rb(+)(out). The catalysed reaction is Li(+)(in) = Li(+)(out). The enzyme catalyses Cs(+)(in) = Cs(+)(out). Functionally, pore-forming subunit of the rod cyclic nucleotide-gated channel. Mediates rod photoresponses at dim light converting transient changes in intracellular cGMP levels into electrical signals. In the dark, cGMP levels are high and keep the channel open enabling a steady inward current carried by Na(+) and Ca(2+) ions that leads to membrane depolarization and neurotransmitter release from synaptic terminals. Upon photon absorption cGMP levels decline leading to channel closure and membrane hyperpolarization that ultimately slows neurotransmitter release and signals the presence of light, the end point of the phototransduction cascade. Conducts cGMP- and cAMP-gated ion currents, with permeability for monovalent and divalent cations. The selectivity for Ca(2+) over Na(+) increases with cGMP concentrations, whereas the selectivity among monovalent ions is independent of the cGMP levels. The sequence is that of Cyclic nucleotide-gated channel alpha-1 from Bos taurus (Bovine).